A 135-amino-acid chain; its full sequence is Large ribosomal subunit protein uL22 (135 aa).

A disordered region spans residues 112–135 (KKPEKKKLKAKSAKTEEAPKAAEV). Over residues 124–135 (AKTEEAPKAAEV) the composition is skewed to basic and acidic residues.

This sequence belongs to the universal ribosomal protein uL22 family. Part of the 50S ribosomal subunit.

In terms of biological role, this protein binds specifically to 23S rRNA; its binding is stimulated by other ribosomal proteins, e.g. L4, L17, and L20. It is important during the early stages of 50S assembly. It makes multiple contacts with different domains of the 23S rRNA in the assembled 50S subunit and ribosome. Its function is as follows. The globular domain of the protein is located near the polypeptide exit tunnel on the outside of the subunit, while an extended beta-hairpin is found that lines the wall of the exit tunnel in the center of the 70S ribosome. The sequence is that of Large ribosomal subunit protein uL22 from Brachyspira hyodysenteriae (strain ATCC 49526 / WA1).